A 173-amino-acid polypeptide reads, in one-letter code: NADH-ubiquinone oxidoreductase chain 6 (173 aa).

6 helical membrane passes run 1-21, 27-47, 48-68, 85-105, 106-126, and 139-159; these read MTYF…AVAS, YGVV…LSLG, VSFV…VVFV, WGVV…LIVG, GSIG…MFSV, and CGVG…FVVL.

The protein belongs to the complex I subunit 6 family.

It localises to the mitochondrion membrane. It catalyses the reaction a ubiquinone + NADH + 5 H(+)(in) = a ubiquinol + NAD(+) + 4 H(+)(out). In terms of biological role, core subunit of the mitochondrial membrane respiratory chain NADH dehydrogenase (Complex I) that is believed to belong to the minimal assembly required for catalysis. Complex I functions in the transfer of electrons from NADH to the respiratory chain. The immediate electron acceptor for the enzyme is believed to be ubiquinone. In Aethia psittacula (Parakeet auklet), this protein is NADH-ubiquinone oxidoreductase chain 6 (MT-ND6).